Reading from the N-terminus, the 405-residue chain is Glucose-1-phosphate adenylyltransferase 1 (405 aa).

Alpha-D-glucose 1-phosphate contacts are provided by residues Tyr96, Gly161, 176–177, and Ser194; that span reads EK.

Belongs to the bacterial/plant glucose-1-phosphate adenylyltransferase family. Homotetramer.

It carries out the reaction alpha-D-glucose 1-phosphate + ATP + H(+) = ADP-alpha-D-glucose + diphosphate. It participates in glycan biosynthesis; glycogen biosynthesis. Its function is as follows. Involved in the biosynthesis of ADP-glucose, a building block required for the elongation reactions to produce glycogen. Catalyzes the reaction between ATP and alpha-D-glucose 1-phosphate (G1P) to produce pyrophosphate and ADP-Glc. In Vibrio cholerae serotype O1 (strain ATCC 39315 / El Tor Inaba N16961), this protein is Glucose-1-phosphate adenylyltransferase 1.